Here is a 425-residue protein sequence, read N- to C-terminus: tRNA(Ile)-lysidine synthase (425 aa).

27–32 contacts ATP; sequence SGGLDS.

It belongs to the tRNA(Ile)-lysidine synthase family.

The protein localises to the cytoplasm. It carries out the reaction cytidine(34) in tRNA(Ile2) + L-lysine + ATP = lysidine(34) in tRNA(Ile2) + AMP + diphosphate + H(+). Ligates lysine onto the cytidine present at position 34 of the AUA codon-specific tRNA(Ile) that contains the anticodon CAU, in an ATP-dependent manner. Cytidine is converted to lysidine, thus changing the amino acid specificity of the tRNA from methionine to isoleucine. In Streptococcus pneumoniae (strain JJA), this protein is tRNA(Ile)-lysidine synthase.